Reading from the N-terminus, the 1597-residue chain is Transmembrane protein 131-like (1597 aa).

Positions M1–G40 are cleaved as a signal peptide. Residues Q41–S869 are Extracellular-facing. N-linked (GlcNAc...) asparagine glycosylation is found at N343, N593, N709, and N846. The segment at D696 to N916 is required for Wnt-signaling inhibition and LRP6 degradation. The chain crosses the membrane as a helical span at residues F870–F890. The Cytoplasmic portion of the chain corresponds to Q891–M1597. The segment covering Q907–G917 has biased composition (low complexity). Disordered stretches follow at residues Q907–H928, A1096–L1240, and D1252–D1322. Over residues R1213–A1222 the composition is skewed to basic residues. Low complexity predominate over residues S1223–R1239. Basic and acidic residues predominate over residues P1269–C1290. Positions S1291 to S1319 are enriched in low complexity.

Belongs to the TMEM131 family.

It localises to the cell membrane. The protein localises to the endoplasmic reticulum. The protein resides in the cytoplasm. Its function is as follows. In its membrane-associated form, antagonizes canonical Wnt signaling by triggering lysosome-dependent degradation of Wnt-activated LRP6. Regulates thymocyte proliferation. This is Transmembrane protein 131-like from Mus musculus (Mouse).